Consider the following 346-residue polypeptide: Enoyl-[acyl-carrier-protein] reductase, mitochondrial (346 aa).

The transit peptide at 1–22 (MQKTIRSQALIYRKFGDPLKVL) directs the protein to the mitochondrion. The active-site Proton donor is the Tyr59. NADP(+) contacts are provided by residues Asn131, 157–160 (NSGV), 180–182 (RNR), 249–252 (YGGM), 274–276 (VAV), and Lys332.

The protein belongs to the zinc-containing alcohol dehydrogenase family. Quinone oxidoreductase subfamily. As to quaternary structure, homodimer.

It is found in the mitochondrion. The catalysed reaction is a 2,3-saturated acyl-[ACP] + NADP(+) = a (2E)-enoyl-[ACP] + NADPH + H(+). Functionally, catalyzes the NADPH-dependent reduction of trans-2-enoyl thioesters in mitochondrial fatty acid synthesis (fatty acid synthesis type II). Fatty acid chain elongation in mitochondria uses acyl carrier protein (ACP) as an acyl group carrier, but the enzyme accepts both ACP and CoA thioesters as substrates in vitro. May provide the octanoyl chain used for lipoic acid biosynthesis, regulating protein lipoylation and mitochondrial respiratory activity. Involved in iron homeostasis; affecting Fe-S cluster assembly and ceramide metabolism. Required for proper morphology and bioenergetic functions of mitochondria. Required for maintenance of neurons. This Caenorhabditis elegans protein is Enoyl-[acyl-carrier-protein] reductase, mitochondrial.